A 180-amino-acid chain; its full sequence is Large ribosomal subunit protein uL6 (180 aa).

This sequence belongs to the universal ribosomal protein uL6 family. Part of the 50S ribosomal subunit.

Its function is as follows. This protein binds to the 23S rRNA, and is important in its secondary structure. It is located near the subunit interface in the base of the L7/L12 stalk, and near the tRNA binding site of the peptidyltransferase center. This Prosthecochloris aestuarii (strain DSM 271 / SK 413) protein is Large ribosomal subunit protein uL6.